A 667-amino-acid polypeptide reads, in one-letter code: Putative L-type lectin-domain containing receptor kinase I.4 (667 aa).

Residues 1–21 form the signal peptide; it reads MDCRLHLVLFFSCVCLICLSG. At 22 to 294 the chain is on the extracellular side; that stretch reads QQETGFVYNG…PREEKKKLHP (273 aa). A legume-lectin like region spans residues 24-257; that stretch reads ETGFVYNGFH…NQYILGWSFS (234 aa). Residues Asn55, Asn110, Asn124, Asn128, Asn181, Asn204, and Asn225 are each glycosylated (N-linked (GlcNAc...) asparagine). Residues 295–315 form a helical membrane-spanning segment; the sequence is LLIGLVILLVIPVLMVLGGVY. Residues 316–667 lie on the Cytoplasmic side of the membrane; sequence WYRRKKYAEV…THSILEGYGR (352 aa). The Protein kinase domain occupies 350 to 625; that stretch reads FVKDALVGKG…QYLSQKQPLP (276 aa). Residues 356–364 and Lys378 each bind ATP; that span reads VGKGGFGKV. Residue Asp474 is the Proton acceptor of the active site.

In the C-terminal section; belongs to the protein kinase superfamily. Ser/Thr protein kinase family. The protein in the N-terminal section; belongs to the leguminous lectin family.

The protein resides in the cell membrane. It catalyses the reaction L-seryl-[protein] + ATP = O-phospho-L-seryl-[protein] + ADP + H(+). The enzyme catalyses L-threonyl-[protein] + ATP = O-phospho-L-threonyl-[protein] + ADP + H(+). The sequence is that of Putative L-type lectin-domain containing receptor kinase I.4 (LECRK14) from Arabidopsis thaliana (Mouse-ear cress).